A 65-amino-acid chain; its full sequence is Large ribosomal subunit protein bL35 (65 aa).

The span at 1-10 shows a compositional bias: basic and acidic residues; it reads MPKMKTDRGA. Residues 1–24 are disordered; the sequence is MPKMKTDRGAAKRFKKTGSGGFKC.

It belongs to the bacterial ribosomal protein bL35 family.

This is Large ribosomal subunit protein bL35 from Tolumonas auensis (strain DSM 9187 / NBRC 110442 / TA 4).